Consider the following 657-residue polypeptide: Glycogen debranching enzyme (657 aa).

The active-site Nucleophile is the aspartate 336. Glutamate 371 serves as the catalytic Proton donor. A disordered region spans residues 460–479 (ANGEENRDGTNNNYSNNHGK).

Belongs to the glycosyl hydrolase 13 family.

It catalyses the reaction Hydrolysis of (1-&gt;6)-alpha-D-glucosidic linkages to branches with degrees of polymerization of three or four glucose residues in limit dextrin.. Its pathway is glycan degradation; glycogen degradation. Functionally, removes maltotriose and maltotetraose chains that are attached by 1,6-alpha-linkage to the limit dextrin main chain, generating a debranched limit dextrin. This is Glycogen debranching enzyme from Shigella flexneri serotype 5b (strain 8401).